Here is a 328-residue protein sequence, read N- to C-terminus: Bidirectional sugar transporter SWEET16 (328 aa).

At 1–5 (MADPS) the chain is on the extracellular side. The chain crosses the membrane as a helical span at residues 6–26 (FFVGIVGNVISILVFASPIAT). The MtN3/slv 1 domain occupies 6–92 (FFVGIVGNVI…TLYLAYAPRE (87 aa)). Residues 27–38 (FRRIVRSKSTEE) are Cytoplasmic-facing. The helical transmembrane segment at 39–56 (FRWLPYVTTLLSTSLWTF) threads the bilayer. The Extracellular portion of the chain corresponds to 57–63 (YGLHKPG). Residues 64–84 (GLLIVTVNGSGAALEAIYVTL) form a helical membrane-spanning segment. The Cytoplasmic segment spans residues 85–99 (YLAYAPRETKAKMVK). Residues 100–120 (VVLAVNVGALAAVVAVALVAL) traverse the membrane as a helical segment. Residues 121–125 (HGGVR) lie on the Extracellular side of the membrane. Residues 126 to 146 (LFVVGVLCAALTIGMYAAPMA) form a helical membrane-spanning segment. Residues 127–213 (FVVGVLCAAL…LYMAYRRTKK (87 aa)) form the MtN3/slv 2 domain. The Cytoplasmic segment spans residues 147–161 (AMRTVVKTRSVEYMP). The chain crosses the membrane as a helical span at residues 162–182 (FSLSFFLFLNGGVWSVYSLLV). At 183 to 185 (KDY) the chain is on the extracellular side. A helical transmembrane segment spans residues 186-206 (FIGIPNAIGFALGTAQLALYM). The Cytoplasmic segment spans residues 207–328 (AYRRTKKPAG…ATTAGPGDRH (122 aa)). Basic residues predominate over residues 288-299 (HQHHGGHHHHHR). The tract at residues 288-328 (HQHHGGHHHHHRFDTVPDDDDEAVAAGGTTPATTAGPGDRH) is disordered. The segment covering 312–328 (AAGGTTPATTAGPGDRH) has biased composition (low complexity).

Belongs to the SWEET sugar transporter family. In terms of assembly, forms homooligomers and/or heterooligomers.

The protein resides in the cell membrane. Mediates both low-affinity uptake and efflux of sugar across the plasma membrane. This chain is Bidirectional sugar transporter SWEET16 (SWEET16), found in Oryza sativa subsp. japonica (Rice).